A 486-amino-acid polypeptide reads, in one-letter code: Vacuolar-processing enzyme beta-isozyme (486 aa).

Residues 1-21 (MAKSCYFRPALLLLLVLLVHA) form the signal peptide. His169 is an active-site residue. The active-site Nucleophile is Cys211. Cysteines 244 and 258 form a disulfide. Residue Asn309 is glycosylated (N-linked (GlcNAc...) asparagine). Intrachain disulfides connect Cys420–Cys450 and Cys432–Cys467.

The protein belongs to the peptidase C13 family. Auto-catalytic activation. In terms of tissue distribution, seed specific. Also expressed in the flowers and buds.

The protein localises to the vacuole. It is found in the protein storage vacuole. It catalyses the reaction Hydrolysis of proteins and small molecule substrates at -Asn-|-Xaa- bonds.. Functionally, asparagine-specific endopeptidase involved in the processing of vacuolar seed protein precursors into the mature forms. Probably involved in post-translational proteolysis of seed storage proteins in the protein storage vacuole of developing seeds. The chain is Vacuolar-processing enzyme beta-isozyme from Arabidopsis thaliana (Mouse-ear cress).